The chain runs to 45 residues: Bomanin Short 1 (45 aa).

A signal peptide spans 1–20 (MKFFSVVTVFVLGLLAVANA). A propeptide spans 21-27 (VPLSPDP) (removed by a dipeptidylpeptidase). A disulfide bridge links Cys-36 with Cys-39. The residue at position 43 (Gly-43) is a Glycine amide.

Hemolymph (at protein level).

The protein localises to the secreted. Its function is as follows. Secreted immune-induced peptide induced by Toll signaling. Has a role in resistance to bacterial and fungal infections. Has no activity against the fungus C.glabrata in vitro. This Drosophila melanogaster (Fruit fly) protein is Bomanin Short 1.